The primary structure comprises 137 residues: Large-conductance mechanosensitive channel (137 aa).

2 helical membrane passes run 10–30 (FAMR…AAFG) and 76–96 (GTFI…FSAV).

The protein belongs to the MscL family. As to quaternary structure, homopentamer.

It is found in the cell inner membrane. Functionally, channel that opens in response to stretch forces in the membrane lipid bilayer. May participate in the regulation of osmotic pressure changes within the cell. The protein is Large-conductance mechanosensitive channel of Yersinia pseudotuberculosis serotype O:1b (strain IP 31758).